The following is a 176-amino-acid chain: Large ribosomal subunit protein uL10 (176 aa).

The protein belongs to the universal ribosomal protein uL10 family. In terms of assembly, part of the ribosomal stalk of the 50S ribosomal subunit. The N-terminus interacts with L11 and the large rRNA to form the base of the stalk. The C-terminus forms an elongated spine to which L12 dimers bind in a sequential fashion forming a multimeric L10(L12)X complex.

Its function is as follows. Forms part of the ribosomal stalk, playing a central role in the interaction of the ribosome with GTP-bound translation factors. The sequence is that of Large ribosomal subunit protein uL10 from Alcanivorax borkumensis (strain ATCC 700651 / DSM 11573 / NCIMB 13689 / SK2).